We begin with the raw amino-acid sequence, 355 residues long: Aromatic amino acid aminotransferase (355 aa).

Lysine 217 carries the N6-(pyridoxal phosphate)lysine modification.

It belongs to the class-II pyridoxal-phosphate-dependent aminotransferase family. As to quaternary structure, homodimer. Pyridoxal 5'-phosphate serves as cofactor.

It carries out the reaction an aromatic L-alpha-amino acid + 2-oxoglutarate = an aromatic oxo-acid + L-glutamate. Aminotransferase that catalyzes the conversion of aromatic amino acids and 2-oxoglutarate into corresponding aromatic oxo acids and L-glutamate. The chain is Aromatic amino acid aminotransferase from Mycolicibacterium paratuberculosis (strain ATCC BAA-968 / K-10) (Mycobacterium paratuberculosis).